Reading from the N-terminus, the 82-residue chain is UPF0512 protein P (82 aa).

Belongs to the UPF0512 family.

The protein is UPF0512 protein P of Dictyostelium discoideum (Social amoeba).